The following is a 328-amino-acid chain: LOB domain-containing protein 27 (328 aa).

An LOB domain is found at 35-136; it reads GACAACKYQR…EELKAVNSQL (102 aa).

Belongs to the LOB domain-containing protein family.

This chain is LOB domain-containing protein 27 (LBD27), found in Arabidopsis thaliana (Mouse-ear cress).